Consider the following 307-residue polypeptide: Pyridoxal 5'-phosphate synthase subunit PdxS (307 aa).

The segment covering 1-10 (MRGQPRPKLR) has biased composition (basic residues). Residues 1–20 (MRGQPRPKLRRMTEQQTGTP) are disordered. A D-ribose 5-phosphate-binding site is contributed by aspartate 37. Lysine 94 serves as the catalytic Schiff-base intermediate with D-ribose 5-phosphate. Residue glycine 166 coordinates D-ribose 5-phosphate. Arginine 178 is a D-glyceraldehyde 3-phosphate binding site. D-ribose 5-phosphate-binding positions include glycine 227 and 248–249 (GS).

The protein belongs to the PdxS/SNZ family. As to quaternary structure, in the presence of PdxT, forms a dodecamer of heterodimers.

The enzyme catalyses aldehydo-D-ribose 5-phosphate + D-glyceraldehyde 3-phosphate + L-glutamine = pyridoxal 5'-phosphate + L-glutamate + phosphate + 3 H2O + H(+). The protein operates within cofactor biosynthesis; pyridoxal 5'-phosphate biosynthesis. Its function is as follows. Catalyzes the formation of pyridoxal 5'-phosphate from ribose 5-phosphate (RBP), glyceraldehyde 3-phosphate (G3P) and ammonia. The ammonia is provided by the PdxT subunit. Can also use ribulose 5-phosphate and dihydroxyacetone phosphate as substrates, resulting from enzyme-catalyzed isomerization of RBP and G3P, respectively. The polypeptide is Pyridoxal 5'-phosphate synthase subunit PdxS (Deinococcus radiodurans (strain ATCC 13939 / DSM 20539 / JCM 16871 / CCUG 27074 / LMG 4051 / NBRC 15346 / NCIMB 9279 / VKM B-1422 / R1)).